We begin with the raw amino-acid sequence, 525 residues long: Cytochrome P450 703A2 (525 aa).

The chain crosses the membrane as a helical span at residues 3-23 (PFLLSIILCSWIFVVVSWKKL). A heme-binding site is contributed by Cys-455.

This sequence belongs to the cytochrome P450 family. Heme is required as a cofactor.

The protein localises to the membrane. It carries out the reaction dodecanoate + reduced [NADPH--hemoprotein reductase] + O2 = 7-hydroxydodecanoate + oxidized [NADPH--hemoprotein reductase] + H2O + H(+). Involved in pollen exine and anther epicuticular layer development. Catalyzes the in-chain hydroxylation of lauric acid (C12:0) preferentially on position 7, generating 7-hydroxylated lauric acid. Does not possess activity with other fatty acids (C14:0, C16:0, C16:1, and C18:0). Participates in a conserved pathway of in-chain hydroxylation of lauric acid required for anther cuticle and pollen exine formation. Directly regulated by TDR, a known regulator of tapetum programmed cell death (PCD) and pollen exine formation. This is Cytochrome P450 703A2 from Oryza sativa subsp. japonica (Rice).